Reading from the N-terminus, the 320-residue chain is MSGKDNKGSIRFEIQNFSGLAKATEHKPVQIGHVEWILGAFTSTSDATNNAKHLGIHLKCNEELRSNLWSCDASIRFSLLRLNSNEDDDAFSMEFQQKFDDLNKIVVVNNFKNWEEAICYDNRFVLDKHAVLEVQITVNKIAGIHERIIETFDQPKEHLTDVVLVLEGKHVHVGKQVLATSSQFFQKMFYSNFAEKTQAEIKIDDVTHSEFIDLLNVIYPTHMLINSSNVSHLLKLSDRFAVPRVLEKAETFLILDQKTHLIDKLKFAEVYRLSRLQNACLSQLETSEDVTALKHHENYKSLDHITYNALLQKLIDLLED.

Positions lysine 7–isoleucine 136 constitute an MATH domain. The BTB domain maps to threonine 160 to serine 227.

In Caenorhabditis elegans, this protein is BTB and MATH domain-containing protein 36 (bath-36).